We begin with the raw amino-acid sequence, 530 residues long: Metal transporter Nramp5 (530 aa).

The segment covering 1-10 has biased composition (polar residues); it reads MTGSTVSRQE. The interval 1-53 is disordered; it reads MTGSTVSRQENSPKRPNDSNGEFKRLLVPETSQPEEDELHESPPENQILNVEE. Over residues 11–27 the composition is skewed to basic and acidic residues; the sequence is NSPKRPNDSNGEFKRLL. 12 helical membrane passes run 65-85, 98-118, 147-167, 179-199, 207-227, 253-273, 299-319, 341-361, 387-407, 429-449, 458-478, and 485-505; these read FSWA…IAFL, AVAG…GLLM, ILLW…EVIG, FLPI…ISYL, LEGL…WMFN, AVGV…SALV, AALF…AKGF, YGGG…AAGQ, LSAF…AIMF, IPFA…MGVF, LAWT…LDFF, and FLVG…IIYL.

The protein belongs to the NRAMP (TC 2.A.55) family.

The protein resides in the membrane. Seems to be involved in iron uptake. The polypeptide is Metal transporter Nramp5 (NRAMP5) (Arabidopsis thaliana (Mouse-ear cress)).